A 471-amino-acid chain; its full sequence is Probable ribonuclease FAU-1 (471 aa).

The protein belongs to the FAU-1 family.

Its function is as follows. Probable RNase involved in rRNA stability through maturation and/or degradation of precursor rRNAs. Binds to RNA in loop regions with AU-rich sequences. This Thermococcus gammatolerans (strain DSM 15229 / JCM 11827 / EJ3) protein is Probable ribonuclease FAU-1.